Consider the following 310-residue polypeptide: Malate dehydrogenase (310 aa).

NAD(+) contacts are provided by residues 7–13 (GAAGGIG) and Asp34. Residues Arg81 and Arg87 each contribute to the substrate site. NAD(+) is bound by residues Asn94 and 117–119 (ITN). Substrate contacts are provided by Asn119 and Arg153. His177 acts as the Proton acceptor in catalysis. Residue Met227 participates in NAD(+) binding.

The protein belongs to the LDH/MDH superfamily. MDH type 1 family. Homodimer.

The catalysed reaction is (S)-malate + NAD(+) = oxaloacetate + NADH + H(+). In terms of biological role, catalyzes the reversible oxidation of malate to oxaloacetate. This chain is Malate dehydrogenase, found in Vibrio vulnificus (strain YJ016).